The primary structure comprises 140 residues: T cell receptor alpha chain constant (140 aa).

The 89-residue stretch at 19–107 (KSVCLFTDFD…LVEKSFETDT (89 aa)) folds into the Ig-like C1-type domain. C22 and C72 are oxidised to a cystine. N32, N66, N77, and N113 each carry an N-linked (GlcNAc...) asparagine glycan. Positions 94-115 (CDVKLVEKSFETDTNLNFQNLS) are connecting peptide. A helical membrane pass occupies residues 116-138 (VIGFRILLLKVAGFNLLMTLRLW). At 139–140 (SS) the chain is on the cytoplasmic side.

Alpha-beta TR is a heterodimer composed of an alpha and beta chain; disulfide-linked. The alpha-beta TR is associated with the transmembrane signaling CD3 coreceptor proteins to form the TR-CD3 (TcR or TCR). The assembly of alpha-beta TR heterodimers with CD3 occurs in the endoplasmic reticulum where a single alpha-beta TR heterodimer associates with one CD3D-CD3E heterodimer, one CD3G-CD3E heterodimer and one CD247 homodimer forming a stable octameric structure. CD3D-CD3E and CD3G-CD3E heterodimers preferentially associate with TR alpha and TR beta chains, respectively. The association of the CD247 homodimer is the last step of TcR assembly in the endoplasmic reticulum and is required for transport to the cell surface.

It is found in the cell membrane. Functionally, constant region of T cell receptor (TR) alpha chain. Alpha-beta T cell receptors are antigen specific receptors which are essential to the immune response and are present on the cell surface of T lymphocytes. Recognize peptide-major histocompatibility (MH) (pMH) complexes that are displayed by antigen presenting cells (APC), a prerequisite for efficient T cell adaptive immunity against pathogens. Binding of alpha-beta TR to pMH complex initiates TR-CD3 clustering on the cell surface and intracellular activation of LCK that phosphorylates the ITAM motifs of CD3G, CD3D, CD3E and CD247 enabling the recruitment of ZAP70. In turn, ZAP70 phosphorylates LAT, which recruits numerous signaling molecules to form the LAT signalosome. The LAT signalosome propagates signal branching to three major signaling pathways, the calcium, the mitogen-activated protein kinase (MAPK) kinase and the nuclear factor NF-kappa-B (NF-kB) pathways, leading to the mobilization of transcription factors that are critical for gene expression and essential for T cell growth and differentiation. The T cell repertoire is generated in the thymus, by V-(D)-J rearrangement. This repertoire is then shaped by intrathymic selection events to generate a peripheral T cell pool of self-MH restricted, non-autoaggressive T cells. Post-thymic interaction of alpha-beta TR with the pMH complexes shapes TR structural and functional avidity. In Homo sapiens (Human), this protein is T cell receptor alpha chain constant.